The following is a 137-amino-acid chain: Large ribosomal subunit protein uL16c (137 aa).

The segment at 1–21 (MLSPKRTKFRRHHRGRMKGKA) is disordered.

It belongs to the universal ribosomal protein uL16 family. In terms of assembly, part of the 50S ribosomal subunit.

The protein resides in the plastid. Its subcellular location is the chloroplast. The protein is Large ribosomal subunit protein uL16c of Tupiella akineta (Green alga).